A 1158-amino-acid chain; its full sequence is Rho1 guanine nucleotide exchange factor 2 (1158 aa).

A disordered region spans residues 42–141; the sequence is RSSGSITHSP…SFSVSDVSNG (100 aa). Residues 45–63 are compositionally biased toward polar residues; the sequence is GSITHSPTALSSTTSLNEN. Low complexity predominate over residues 68 to 81; sequence FRPASSLSFSPSSL. Positions 97–108 are enriched in polar residues; sequence KNNFYRRSSSTD. A compositionally biased stretch (low complexity) spans 132 to 141; sequence SFSVSDVSNG. The region spanning 447 to 634 is the DH domain; the sequence is KRQEIIFEVI…REFLTKLNYE (188 aa). The PH domain maps to 670-805; sequence LIFKGVVKLK…QHIEKQQDII (136 aa). Phosphoserine occurs at positions 746 and 747. The CNH domain occupies 825–1120; that stretch reads GNKLLCAVAY…KLLTDGRGLI (296 aa).

It is found in the cytoplasm. Its function is as follows. Stimulates the exchange of Rho1 and Rho5 GDP-bound form into GTP-bound form. Controls septum formation, cell wall synthesis and localization of F-actin patches. The polypeptide is Rho1 guanine nucleotide exchange factor 2 (rgf2) (Schizosaccharomyces pombe (strain 972 / ATCC 24843) (Fission yeast)).